A 358-amino-acid chain; its full sequence is Gap junction alpha-5 protein (358 aa).

The Cytoplasmic segment spans residues 1 to 19 (MGDWSFLGEFLEEVHKHST). A helical transmembrane segment spans residues 20–40 (VIGKVWLTVLFIFRMLVLGTA). Residues 41–76 (AESSWGDEQADFQCDTMQPGCGNVCYDQAFPISHIR) are Extracellular-facing. Residues 77 to 97 (YWVLQIIFVSTPSLVYMGHAM) traverse the membrane as a helical segment. Residues 98-164 (HTVRMQEKRK…CSILIRTTME (67 aa)) are Cytoplasmic-facing. A helical membrane pass occupies residues 165-185 (VAFIVGQYLLYGIFLDTLHVC). The Extracellular segment spans residues 186-205 (RRSPCPHPVNCYVSRPTEKN). A helical transmembrane segment spans residues 206 to 226 (VFIVFMLAVAALSLFLSLAEL). Over 227–358 (YHLGWKKLRQ…SKARSDDLSV (132 aa)) the chain is Cytoplasmic. The disordered stretch occupies residues 318-358 (AQKPEVPNGASPGHRLPHGYQSDKRRLSKASSKARSDDLSV). 2 positions are modified to phosphoserine: Ser353 and Ser357.

This sequence belongs to the connexin family. Alpha-type (group II) subfamily. In terms of assembly, a connexon is composed of a hexamer of connexins.

The protein resides in the cell membrane. It localises to the cell junction. The protein localises to the gap junction. Its function is as follows. One gap junction consists of a cluster of closely packed pairs of transmembrane channels, the connexons, through which materials of low MW diffuse from one cell to a neighboring cell. The sequence is that of Gap junction alpha-5 protein (GJA5) from Canis lupus familiaris (Dog).